A 319-amino-acid polypeptide reads, in one-letter code: Ribonucleoside-diphosphate reductase small chain (319 aa).

Fe cation is bound by residues Asp70, Glu101, and His104. Tyr108 is an active-site residue. Fe cation contacts are provided by Glu163, Glu197, and His200. The interval 313–319 (FSLDVDF) is interaction with R1.

It belongs to the ribonucleoside diphosphate reductase small chain family. In terms of assembly, interacts with RNR1/OPG080 subunit. Can interact with host RNR1 supunit. The cofactor is Fe cation.

The catalysed reaction is a 2'-deoxyribonucleoside 5'-diphosphate + [thioredoxin]-disulfide + H2O = a ribonucleoside 5'-diphosphate + [thioredoxin]-dithiol. Ribonucleoside-diphosphate reductase holoenzyme provides the precursors necessary for viral DNA synthesis. Allows virus growth in non-dividing cells. Catalyzes the biosynthesis of deoxyribonucleotides from the corresponding ribonucleotides. The protein is Ribonucleoside-diphosphate reductase small chain (OPG048) of Vaccinia virus (strain Ankara) (VACV).